The following is a 175-amino-acid chain: uncharacterized protein (175 aa).

A mitochondrion-targeting transit peptide spans Met1–Asn11. Positions Gln29–Asn48 are disordered.

It is found in the mitochondrion. This is an uncharacterized protein from Mus musculus (Mouse).